Consider the following 187-residue polypeptide: Elongation factor P (187 aa).

The protein belongs to the elongation factor P family.

It is found in the cytoplasm. Its pathway is protein biosynthesis; polypeptide chain elongation. Its function is as follows. Involved in peptide bond synthesis. Stimulates efficient translation and peptide-bond synthesis on native or reconstituted 70S ribosomes in vitro. Probably functions indirectly by altering the affinity of the ribosome for aminoacyl-tRNA, thus increasing their reactivity as acceptors for peptidyl transferase. The chain is Elongation factor P from Brachyspira hyodysenteriae (strain ATCC 49526 / WA1).